Here is a 398-residue protein sequence, read N- to C-terminus: Deoxyguanosinetriphosphate triphosphohydrolase-like protein (398 aa).

The HD domain maps to 68–215; sequence RLTHTLEVAQ…AAISDDIAYD (148 aa).

The protein belongs to the dGTPase family. Type 2 subfamily.

This is Deoxyguanosinetriphosphate triphosphohydrolase-like protein from Azorhizobium caulinodans (strain ATCC 43989 / DSM 5975 / JCM 20966 / LMG 6465 / NBRC 14845 / NCIMB 13405 / ORS 571).